The sequence spans 397 residues: Elongation factor Tu (397 aa).

The region spanning 10–206 (KPHVNIGTIG…EVDAYIPTPE (197 aa)) is the tr-type G domain. The interval 19–26 (GHVDHGKT) is G1. A GTP-binding site is contributed by 19 to 26 (GHVDHGKT). Thr-26 contributes to the Mg(2+) binding site. A G2 region spans residues 60–64 (GITIN). Positions 81–84 (DCPG) are G3. Residues 81-85 (DCPGH) and 136-139 (NKAD) each bind GTP. A G4 region spans residues 136 to 139 (NKAD). The G5 stretch occupies residues 174 to 176 (SAL).

This sequence belongs to the TRAFAC class translation factor GTPase superfamily. Classic translation factor GTPase family. EF-Tu/EF-1A subfamily. In terms of assembly, monomer.

The protein resides in the cytoplasm. It carries out the reaction GTP + H2O = GDP + phosphate + H(+). In terms of biological role, GTP hydrolase that promotes the GTP-dependent binding of aminoacyl-tRNA to the A-site of ribosomes during protein biosynthesis. This Clostridium acetobutylicum (strain ATCC 824 / DSM 792 / JCM 1419 / IAM 19013 / LMG 5710 / NBRC 13948 / NRRL B-527 / VKM B-1787 / 2291 / W) protein is Elongation factor Tu.